The primary structure comprises 273 residues: MHEAQIRVAIAGAGGRMGRQLIQAAMAMEGVQLGAALEREGSSLLGSDAGELAGVGKSGVIVQSSLEAVKDDFDVFIDFTRPEGTLTHLAFCRQHGKGMVIGTTGFDDAGKQAIREASQEIAIVFAANFSVGVNVMLKLLEKAAKVMGDYSDIEIIEAHHRHKVDAPSGTALAMGEAIAGALDKNLKDCAVYSREGYTGERVPGTIGFATVRAGDIVGEHTAMFADIGERVEITHKASSRMTFANGALRSALWLKTKKNGLFDMRDVLGLDVL.

Residues 12-17 (GAGGRM) and Glu38 contribute to the NAD(+) site. Position 39 (Arg39) interacts with NADP(+). Residues 102-104 (GTT) and 126-129 (AANF) contribute to the NAD(+) site. The active-site Proton donor/acceptor is the His159. His160 contacts (S)-2,3,4,5-tetrahydrodipicolinate. The active-site Proton donor is Lys163. 169–170 (GT) provides a ligand contact to (S)-2,3,4,5-tetrahydrodipicolinate.

It belongs to the DapB family. Homotetramer.

The protein localises to the cytoplasm. The catalysed reaction is (S)-2,3,4,5-tetrahydrodipicolinate + NAD(+) + H2O = (2S,4S)-4-hydroxy-2,3,4,5-tetrahydrodipicolinate + NADH + H(+). It carries out the reaction (S)-2,3,4,5-tetrahydrodipicolinate + NADP(+) + H2O = (2S,4S)-4-hydroxy-2,3,4,5-tetrahydrodipicolinate + NADPH + H(+). It functions in the pathway amino-acid biosynthesis; L-lysine biosynthesis via DAP pathway; (S)-tetrahydrodipicolinate from L-aspartate: step 4/4. Catalyzes the conversion of 4-hydroxy-tetrahydrodipicolinate (HTPA) to tetrahydrodipicolinate. The sequence is that of 4-hydroxy-tetrahydrodipicolinate reductase from Salmonella gallinarum (strain 287/91 / NCTC 13346).